The primary structure comprises 313 residues: Ribonuclease HIII (313 aa).

The segment at 62–88 is disordered; that stretch reads AERWTADAETPAPKKPASKKSIPSVYQ. Positions 96–312 constitute an RNase H type-2 domain; it reads MSVIGSDEVG…TQKAKRIASK (217 aa). A divalent metal cation is bound by residues Asp102, Glu103, and Asp207.

The protein belongs to the RNase HII family. RnhC subfamily. Requires Mn(2+) as cofactor. Mg(2+) is required as a cofactor.

The protein resides in the cytoplasm. The enzyme catalyses Endonucleolytic cleavage to 5'-phosphomonoester.. Its function is as follows. Endonuclease that specifically degrades the RNA of RNA-DNA hybrids. The polypeptide is Ribonuclease HIII (Bacillus licheniformis (strain ATCC 14580 / DSM 13 / JCM 2505 / CCUG 7422 / NBRC 12200 / NCIMB 9375 / NCTC 10341 / NRRL NRS-1264 / Gibson 46)).